The following is a 114-amino-acid chain: Large ribosomal subunit protein uL22c (114 aa).

The protein belongs to the universal ribosomal protein uL22 family. Part of the 50S ribosomal subunit.

It is found in the plastid. The protein localises to the chloroplast. Functionally, this protein binds specifically to 23S rRNA. Its function is as follows. The globular domain of the protein is located near the polypeptide exit tunnel on the outside of the subunit, while an extended beta-hairpin is found that lines the wall of the exit tunnel in the center of the 70S ribosome. This Gracilaria tenuistipitata (Red alga) protein is Large ribosomal subunit protein uL22c (rpl22).